A 517-amino-acid polypeptide reads, in one-letter code: UDP-N-acetylmuramoyl-L-alanyl-D-glutamate--2,6-diaminopimelate ligase (517 aa).

UDP-N-acetyl-alpha-D-muramoyl-L-alanyl-D-glutamate-binding residues include Leu34 and Ser36. Residue 122-128 (GTSGKTT) coordinates ATP. UDP-N-acetyl-alpha-D-muramoyl-L-alanyl-D-glutamate is bound by residues 164–165 (TT), Ser191, and Arg199. Lys231 carries the N6-carboxylysine modification. Meso-2,6-diaminopimelate contacts are provided by residues Arg394, 418–421 (DNPR), Gly476, and Glu480. The short motif at 418–421 (DNPR) is the Meso-diaminopimelate recognition motif element.

This sequence belongs to the MurCDEF family. MurE subfamily. It depends on Mg(2+) as a cofactor. Carboxylation is probably crucial for Mg(2+) binding and, consequently, for the gamma-phosphate positioning of ATP.

The protein resides in the cytoplasm. The catalysed reaction is UDP-N-acetyl-alpha-D-muramoyl-L-alanyl-D-glutamate + meso-2,6-diaminopimelate + ATP = UDP-N-acetyl-alpha-D-muramoyl-L-alanyl-gamma-D-glutamyl-meso-2,6-diaminopimelate + ADP + phosphate + H(+). It participates in cell wall biogenesis; peptidoglycan biosynthesis. Functionally, catalyzes the addition of meso-diaminopimelic acid to the nucleotide precursor UDP-N-acetylmuramoyl-L-alanyl-D-glutamate (UMAG) in the biosynthesis of bacterial cell-wall peptidoglycan. The chain is UDP-N-acetylmuramoyl-L-alanyl-D-glutamate--2,6-diaminopimelate ligase from Corynebacterium glutamicum (strain ATCC 13032 / DSM 20300 / JCM 1318 / BCRC 11384 / CCUG 27702 / LMG 3730 / NBRC 12168 / NCIMB 10025 / NRRL B-2784 / 534).